We begin with the raw amino-acid sequence, 451 residues long: Tubulin alpha-1 chain (451 aa).

Glutamine 11 contacts GTP. Lysine 40 bears the N6-acetyllysine mark. Positions 71, 144, 145, 179, 206, and 228 each coordinate GTP. Glutamate 71 lines the Mg(2+) pocket. The active site involves glutamate 254. The disordered stretch occupies residues 432–451 (YEEVGADSAEGDEEDEGDEY).

Belongs to the tubulin family. As to quaternary structure, dimer of alpha and beta chains. A typical microtubule is a hollow water-filled tube with an outer diameter of 25 nm and an inner diameter of 15 nM. Alpha-beta heterodimers associate head-to-tail to form protofilaments running lengthwise along the microtubule wall with the beta-tubulin subunit facing the microtubule plus end conferring a structural polarity. Microtubules usually have 13 protofilaments but different protofilament numbers can be found in some organisms and specialized cells. It depends on Mg(2+) as a cofactor. Undergoes a tyrosination/detyrosination cycle, the cyclic removal and re-addition of a C-terminal tyrosine residue by the enzymes tubulin tyrosine carboxypeptidase (TTCP) and tubulin tyrosine ligase (TTL), respectively. In terms of processing, acetylation of alpha chains at Lys-40 stabilizes microtubules and affects affinity and processivity of microtubule motors. This modification has a role in multiple cellular functions, ranging from cell motility, cell cycle progression or cell differentiation to intracellular trafficking and signaling.

It localises to the cytoplasm. The protein localises to the cytoskeleton. The enzyme catalyses GTP + H2O = GDP + phosphate + H(+). Functionally, tubulin is the major constituent of microtubules, a cylinder consisting of laterally associated linear protofilaments composed of alpha- and beta-tubulin heterodimers. Microtubules grow by the addition of GTP-tubulin dimers to the microtubule end, where a stabilizing cap forms. Below the cap, tubulin dimers are in GDP-bound state, owing to GTPase activity of alpha-tubulin. The sequence is that of Tubulin alpha-1 chain from Gossypium hirsutum (Upland cotton).